Consider the following 102-residue polypeptide: Large ribosomal subunit protein bL28 (102 aa).

Residues 1–20 (MSNSCDLTGHGWQNGNMVSH) are compositionally biased toward polar residues. A disordered region spans residues 1–27 (MSNSCDLTGHGWQNGNMVSHSNRKTKK).

This sequence belongs to the bacterial ribosomal protein bL28 family.

This Neorickettsia sennetsu (strain ATCC VR-367 / Miyayama) (Ehrlichia sennetsu) protein is Large ribosomal subunit protein bL28.